A 172-amino-acid chain; its full sequence is Single-stranded DNA-binding protein 2 (172 aa).

The SSB domain maps to 6 to 111 (VNKVILVGHI…VIVNVGGTMQ (106 aa)). Residues 55-61 (WHRVVVF) mediate DNA binding. Positions 113-172 (LGRHNSQPQQEPQTPPTAAKGEGKAVKGAGNAAKGKNAAAPQQPPAQPDPAYDFDDDIPF) are disordered. The segment covering 119 to 153 (QPQQEPQTPPTAAKGEGKAVKGAGNAAKGKNAAAP) has biased composition (low complexity). An Important for interaction with partner proteins motif is present at residues 167 to 172 (DDDIPF).

Homotetramer.

Plays an important role in DNA replication, recombination and repair. Binds to ssDNA and to an array of partner proteins to recruit them to their sites of action during DNA metabolism. This Salmonella typhimurium (strain LT2 / SGSC1412 / ATCC 700720) protein is Single-stranded DNA-binding protein 2 (ssb2).